The following is a 424-amino-acid chain: UDP-N-acetylglucosamine 1-carboxyvinyltransferase (424 aa).

22 to 23 (KN) contacts phosphoenolpyruvate. UDP-N-acetyl-alpha-D-glucosamine is bound at residue Arg93. The Proton donor role is filled by Cys117. Cys117 carries the 2-(S-cysteinyl)pyruvic acid O-phosphothioketal modification. Residues 122 to 126 (RPVDL), 162 to 165 (KVSV), Asp307, and Ile329 contribute to the UDP-N-acetyl-alpha-D-glucosamine site.

It belongs to the EPSP synthase family. MurA subfamily.

Its subcellular location is the cytoplasm. The enzyme catalyses phosphoenolpyruvate + UDP-N-acetyl-alpha-D-glucosamine = UDP-N-acetyl-3-O-(1-carboxyvinyl)-alpha-D-glucosamine + phosphate. It participates in cell wall biogenesis; peptidoglycan biosynthesis. Functionally, cell wall formation. Adds enolpyruvyl to UDP-N-acetylglucosamine. This is UDP-N-acetylglucosamine 1-carboxyvinyltransferase from Haemophilus influenzae (strain PittGG).